The following is a 406-amino-acid chain: Plasma serine protease inhibitor (406 aa).

The signal sequence occupies residues 1 to 19 (MQLFLLLCLVLLSPQGASL). Positions 20-25 (HRHHPR) are cleaved as a propeptide — removed in mature form. Threonine 39 is a glycosylation site (O-linked (GalNAc...) threonine). 3 N-linked (GlcNAc...) asparagine glycosylation sites follow: asparagine 249, asparagine 262, and asparagine 338.

It belongs to the serpin family. Forms protease inhibiting heterodimers in extracellular body fluids with serine proteases such as activated protein C/coagulation factor V/F5, acrosin/ACR, chymotrypsinogen B/CTRB1, prothrombin/F2, factor Xa/F10, factor XI/F11, kallikrein/KLKB1, tissue kallikrein, trypsin/PRSS1, prostate specific antigen/KLK3, tissue plasminogen activator/PLAT and urinary plasminogen activator/PLAU. Forms membrane-anchored serine proteases inhibiting heterodimers with TMPRSS7 and TMPRSS11E. Interacts with SEMG2. N- and O-glycosylated. N-glycosylation consists of a mixture of sialylated bi- (including sialyl-Lewis X epitopes), tri- and tetra-antennary complex-type chains; affects the maximal heparin- and thrombomodulin-enhanced rates of thrombin inhibition. O-glycosylated with core 1 or possibly core 8 glycans. Further modified with 2 sialic acid residues. In terms of processing, proteolytically cleaved. Inhibition of proteases is accompanied by formation of a stable enzyme-inhibitor complex and by degradation of the serpin to lower molecular weight derivatives. Proteolytically cleaved at the N-terminus; inhibits slightly the heparin- and thrombomodulin-enhanced rates of thrombin inhibition. Predominantly expressed in the epithelium of seminal vesicles. Expressed in the proximal tubular epithelium of the kidney. Expressed in the superficial and more differentiated epidermal keratinocytes of the skin. Expressed in megakaryocytes and platelets. Expressed poorly in kidney tumor cells compared to non tumor kidney tissues. Expressed in spermatozoa. Present in very high concentration in seminal plasma. Present in high concentration in plasma, synovial and Graaf follicle fluids. Present in low concentration in breast milk and in amniotic fluids. Present in very low concentration in urine, cerebrospinal fluids, saliva and tears (at protein level). Strongly expressed in liver. Expressed in kidney, spleen, pancreas, skeletal muscle, heart, testes, ovary, interstitial Leydig cells, epididymal glands, seminal vesicles and prostate.

It localises to the secreted. It is found in the extracellular space. With respect to regulation, its inhibitory activity is greatly enhanced in the presence of glycosaminoglycans, heparin, thrombomodulin and phospholipids vesicles. Functionally, heparin-dependent serine protease inhibitor acting in body fluids and secretions. Inactivates serine proteases by binding irreversibly to their serine activation site. Involved in the regulation of intravascular and extravascular proteolytic activities. Plays hemostatic roles in the blood plasma. Acts as a procoagulant and pro-inflammatory factor by inhibiting the anticoagulant activated protein C factor as well as the generation of activated protein C factor by the thrombin/thrombomodulin complex. Acts as an anticoagulant factor by inhibiting blood coagulation factors like prothrombin, factor XI, factor Xa, plasma kallikrein and fibrinolytic enzymes such as tissue- and urinary-type plasminogen activators. In seminal plasma, inactivates several serine proteases implicated in the reproductive system. Inhibits the serpin acrosin; indirectly protects component of the male genital tract from being degraded by excessive released acrosin. Inhibits tissue- and urinary-type plasminogen activator, prostate-specific antigen and kallikrein activities; has a control on the sperm motility and fertilization. Inhibits the activated protein C-catalyzed degradation of SEMG1 and SEMG2; regulates the degradation of semenogelin during the process of transfer of spermatozoa from the male reproductive tract into the female tract. In urine, inhibits urinary-type plasminogen activator and kallikrein activities. Inactivates membrane-anchored serine proteases activities such as MPRSS7 and TMPRSS11E. Inhibits urinary-type plasminogen activator-dependent tumor cell invasion and metastasis. May also play a non-inhibitory role in seminal plasma and urine as a hydrophobic hormone carrier by its binding to retinoic acid. In Homo sapiens (Human), this protein is Plasma serine protease inhibitor (SERPINA5).